The primary structure comprises 280 residues: MKSLTLKAPAKVNYLLDVIRRRPDGYHDLRMVMQRVNLCDEIAIALTDSPELSVCCGKDGVPDGPGNIAWKAARAMLDLAAGGQGATISIVKNIPVAAGLGGGSSDAATVLMGMNQLLELGLTDQELMRIGVKLGADVPFFIFKKTALAEGIGEQLRAMPPMPALWVLLVNPGVHVSTAWVYKNLRLTSRGELAKLPQFFSTVEDVCSMLSNDLESVTIPAFPVIADIKRAMLAKGALGAMMSGSGPTVFGLFRDREGAEAARAELVEGSGWFAAVAETL.

Lys11 is a catalytic residue. 95-105 is a binding site for ATP; the sequence is PVAAGLGGGSS. Residue Asp137 is part of the active site.

This sequence belongs to the GHMP kinase family. IspE subfamily.

It catalyses the reaction 4-CDP-2-C-methyl-D-erythritol + ATP = 4-CDP-2-C-methyl-D-erythritol 2-phosphate + ADP + H(+). It functions in the pathway isoprenoid biosynthesis; isopentenyl diphosphate biosynthesis via DXP pathway; isopentenyl diphosphate from 1-deoxy-D-xylulose 5-phosphate: step 3/6. Functionally, catalyzes the phosphorylation of the position 2 hydroxy group of 4-diphosphocytidyl-2C-methyl-D-erythritol. The chain is 4-diphosphocytidyl-2-C-methyl-D-erythritol kinase from Pelobacter propionicus (strain DSM 2379 / NBRC 103807 / OttBd1).